Reading from the N-terminus, the 637-residue chain is Neutral ceramidase (637 aa).

Residue His34 participates in Mg(2+) binding. Residues His96 and His204 each contribute to the Zn(2+) site. Ser256 functions as the Nucleophile in the catalytic mechanism. Residues Glu417 and Tyr453 each contribute to the Zn(2+) site. 3 residues coordinate Mg(2+): Asp575, Asp577, and Thr580.

This sequence belongs to the neutral ceramidase family. Zn(2+) is required as a cofactor. It depends on Mg(2+) as a cofactor.

It carries out the reaction an N-acylsphing-4-enine + H2O = sphing-4-enine + a fatty acid. The catalysed reaction is an N-acylsphinganine + H2O = sphinganine + a fatty acid. The enzyme catalyses an N-acyl-(4R)-4-hydroxysphinganine + H2O = (4R)-hydroxysphinganine + a fatty acid. It catalyses the reaction N-(9Z-octadecenoyl)-sphing-4-enine + H2O = sphing-4-enine + (9Z)-octadecenoate. It carries out the reaction N-(hexanoyl)sphing-4-enine + H2O = hexanoate + sphing-4-enine. The catalysed reaction is N-hexadecanoylsphing-4-enine + H2O = sphing-4-enine + hexadecanoate. The enzyme catalyses N-octadecanoylsphing-4-enine + H2O = sphing-4-enine + octadecanoate. It catalyses the reaction N-eicosanoyl-sphing-4-enine + H2O = eicosanoate + sphing-4-enine. It carries out the reaction N-(15Z-tetracosenoyl)-sphing-4-enine + H2O = (15Z)-tetracosenoate + sphing-4-enine. The catalysed reaction is N-tetracosanoyl-sphing-4-enine + H2O = tetracosanoate + sphing-4-enine. With respect to regulation, 90% of activity is inhibited by nickel, zinc and calcium ions. Magnesium, cobalt, copper and manganese ions inhibit between 50 and 80% of activity. In terms of biological role, catalyzes the cleavage of the N-acyl linkage of the ceramides (Cers) to yield sphingosine (Sph) and free fatty acid. Also catalyzes the synthesis of Cers from Sph and fatty acid. Cers containning C6-C24 fatty acids are well hydrolyzed, and Cers with mono unsaturated fatty acids are much more hydrolyzed than those with saturated fatty acids. This chain is Neutral ceramidase, found in Mycobacterium tuberculosis (strain ATCC 25618 / H37Rv).